Consider the following 264-residue polypeptide: 2-dehydro-3-deoxy-D-gluconate 5-dehydrogenase (264 aa).

14-38 (LVTGSTHGLGMAMAKGLGLAGATIV) provides a ligand contact to NAD(+). Ser-147 contributes to the substrate binding site. The active-site Proton acceptor is the Tyr-160.

It belongs to the short-chain dehydrogenases/reductases (SDR) family. In terms of assembly, homotetramer.

The protein resides in the cytoplasm. The catalysed reaction is 2-dehydro-3-deoxy-D-gluconate + NAD(+) = 3-deoxy-D-glycero-2,5-hexodiulosonate + NADH + H(+). Its function is as follows. 2-dehydro-3-deoxy-D-gluconate 5-dehydrogenase involved in ulvan degradation. Ulvan is the main polysaccharide component of the Ulvales (green seaweed) cell wall. It is composed of disaccharide building blocks comprising 3-sulfated rhamnose (Rha3S) linked to D-glucuronic acid (GlcA), L-iduronic acid (IduA), or D-xylose (Xyl). Catalyzes the reversible reduction of 2,5-diketo-3-deoxygluconate (DKII or 4,6-dihydroxy-2,5-dioxohexanoate) into 2-keto-3-deoxygluconate (KDG or 2-dehydro-3-deoxygluconate) with a concomitant oxidation of NADH. This chain is 2-dehydro-3-deoxy-D-gluconate 5-dehydrogenase (kduD), found in Formosa agariphila (strain DSM 15362 / KCTC 12365 / LMG 23005 / KMM 3901 / M-2Alg 35-1).